Consider the following 398-residue polypeptide: Mu-type opioid receptor (398 aa).

At 1-66 the chain is on the extracellular side; it reads MDSSTGPGNT…CPQTGSPSMV (66 aa). N-linked (GlcNAc...) asparagine glycosylation is found at Asn9, Asn31, Asn38, Asn46, and Asn53. A helical transmembrane segment spans residues 67 to 91; the sequence is TAITIMALYSIVCVVGLFGNFLVMY. The Cytoplasmic segment spans residues 92-104; the sequence is VIVRYTKMKTATN. A helical transmembrane segment spans residues 105–129; it reads IYIFNLALADALATSTLPFQSVNYL. Topologically, residues 130 to 140 are extracellular; sequence MGTWPFGTILC. Cys140 and Cys217 are joined by a disulfide. A helical transmembrane segment spans residues 141–163; the sequence is KIVISIDYYNMFTSIFTLCTMSV. At 164-183 the chain is on the cytoplasmic side; the sequence is DRYIAVCHPVKALDFRTPRN. Position 166 is a phosphotyrosine (Tyr166). The helical transmembrane segment at 184–205 threads the bilayer; it reads AKIVNVCNWILSSAIGLPVMFM. Residues 206 to 228 lie on the Extracellular side of the membrane; it reads ATTKYRQGSIDCTLTFSHPTWYW. Residues 229 to 253 traverse the membrane as a helical segment; it reads ENLLKICVFIFAFIMPVLIITVCYG. The Cytoplasmic portion of the chain corresponds to 254 to 277; it reads LMILRLKSVRMLSGSKEKDRNLRR. A helical membrane pass occupies residues 278–304; the sequence is ITRMVLVVVAVFIVCWTPIHIYVIIKA. Residues 305–312 are Extracellular-facing; sequence LITIPETT. A helical transmembrane segment spans residues 313–336; sequence FQTVSWHFCIALGYTNSCLNPVLY. The NPxxY; plays a role in stabilizing the activated conformation of the receptor motif lies at 332–336; the sequence is NPVLY. The Cytoplasmic portion of the chain corresponds to 337–398; sequence AFLDENFKRC…NLEAETAPLP (62 aa). Residue Cys351 is the site of S-palmitoyl cysteine attachment. The segment at 361–385 is disordered; sequence QNSTRVRQNTREHPSTANTVDRTNH. The residue at position 363 (Ser363) is a Phosphoserine. Residue Thr370 is modified to Phosphothreonine. The residue at position 375 (Ser375) is a Phosphoserine. Thr394 bears the Phosphothreonine mark.

The protein belongs to the G-protein coupled receptor 1 family. Forms homooligomers and heterooligomers with other GPCRs, such as OPRD1, OPRK1, OPRL1, NPFFR2, ADRA2A, SSTR2, CNR1 and CCR5 (probably in dimeric forms). Interacts with heterotrimeric G proteins; interaction with a heterotrimeric complex containing GNAI1, GNB1 and GNG2 stabilizes the active conformation of the receptor and increases its affinity for endomorphin-2, the synthetic opioid peptide DAMGO and for morphinan agonists. Interacts with PPL; the interaction disrupts agonist-mediated G-protein activation. Interacts (via C-terminus) with DNAJB4 (via C-terminus). Interacts with calmodulin; the interaction inhibits the constitutive activity of OPRM1; it abolishes basal and attenuates agonist-stimulated G-protein coupling. Interacts with FLNA, PLD2, RANBP9 and WLS and GPM6A. Interacts with RTP4. Interacts with SYP and GNAS. Interacts with RGS9, RGS17, RGS20, RGS4, PPP1R9B and HINT1. Post-translationally, phosphorylated. Differentially phosphorylated in basal and agonist-induced conditions. Agonist-mediated phosphorylation modulates receptor internalization. Phosphorylated by GRK2 in a agonist-dependent manner. Phosphorylation at Tyr-166 requires receptor activation, is dependent on non-receptor protein tyrosine kinase Src and results in a decrease in agonist efficacy by reducing G-protein coupling efficiency. Phosphorylated on tyrosine residues; the phosphorylation is involved in agonist-induced G-protein-independent receptor down-regulation. Phosphorylation at Ser-375 is involved in G-protein-dependent but not beta-arrestin-dependent activation of the ERK pathway. In terms of processing, ubiquitinated. A basal ubiquitination seems not to be related to degradation. Ubiquitination is increased upon formation of OPRM1:OPRD1 oligomers leading to proteasomal degradation; the ubiquitination is diminished by RTP4. As to expression, brain. Is expressed in the cerebral cortex, caudate putamen, nucleus accumbens, septal nuclei, thalamus, hippocampus, and habenula. Not detected in cerebellum.

It localises to the cell membrane. The protein resides in the cell projection. The protein localises to the axon. Its subcellular location is the perikaryon. It is found in the dendrite. It localises to the endosome. In terms of biological role, receptor for endogenous opioids such as beta-endorphin and endomorphin. Receptor for natural and synthetic opioids including morphine, heroin, DAMGO, fentanyl, etorphine, buprenorphin and methadone. Also activated by enkephalin peptides, such as Met-enkephalin or Met-enkephalin-Arg-Phe, with higher affinity for Met-enkephalin-Arg-Phe. Agonist binding to the receptor induces coupling to an inactive GDP-bound heterotrimeric G-protein complex and subsequent exchange of GDP for GTP in the G-protein alpha subunit leading to dissociation of the G-protein complex with the free GTP-bound G-protein alpha and the G-protein beta-gamma dimer activating downstream cellular effectors. The agonist- and cell type-specific activity is predominantly coupled to pertussis toxin-sensitive G(i) and G(o) G alpha proteins, GNAI1, GNAI2, GNAI3 and GNAO1 isoforms Alpha-1 and Alpha-2, and to a lesser extent to pertussis toxin-insensitive G alpha proteins GNAZ and GNA15. They mediate an array of downstream cellular responses, including inhibition of adenylate cyclase activity and both N-type and L-type calcium channels, activation of inward rectifying potassium channels, mitogen-activated protein kinase (MAPK), phospholipase C (PLC), phosphoinositide/protein kinase (PKC), phosphoinositide 3-kinase (PI3K) and regulation of NF-kappa-B. Also couples to adenylate cyclase stimulatory G alpha proteins. The selective temporal coupling to G-proteins and subsequent signaling can be regulated by RGSZ proteins, such as RGS9, RGS17 and RGS4. Phosphorylation by members of the GPRK subfamily of Ser/Thr protein kinases and association with beta-arrestins is involved in short-term receptor desensitization. Beta-arrestins associate with the GPRK-phosphorylated receptor and uncouple it from the G-protein thus terminating signal transduction. The phosphorylated receptor is internalized through endocytosis via clathrin-coated pits which involves beta-arrestins. The activation of the ERK pathway occurs either in a G-protein-dependent or a beta-arrestin-dependent manner and is regulated by agonist-specific receptor phosphorylation. Acts as a class A G-protein coupled receptor (GPCR) which dissociates from beta-arrestin at or near the plasma membrane and undergoes rapid recycling. Receptor down-regulation pathways are varying with the agonist and occur dependent or independent of G-protein coupling. Endogenous ligands induce rapid desensitization, endocytosis and recycling. Heterooligomerization with other GPCRs can modulate agonist binding, signaling and trafficking properties. This Rattus norvegicus (Rat) protein is Mu-type opioid receptor (Oprm1).